The following is a 429-amino-acid chain: Glutamate-1-semialdehyde 2,1-aminomutase (429 aa).

The residue at position 267 (Lys267) is an N6-(pyridoxal phosphate)lysine.

It belongs to the class-III pyridoxal-phosphate-dependent aminotransferase family. HemL subfamily. As to quaternary structure, homodimer. The cofactor is pyridoxal 5'-phosphate.

It is found in the cytoplasm. It catalyses the reaction (S)-4-amino-5-oxopentanoate = 5-aminolevulinate. Its pathway is porphyrin-containing compound metabolism; protoporphyrin-IX biosynthesis; 5-aminolevulinate from L-glutamyl-tRNA(Glu): step 2/2. In Xanthomonas euvesicatoria pv. vesicatoria (strain 85-10) (Xanthomonas campestris pv. vesicatoria), this protein is Glutamate-1-semialdehyde 2,1-aminomutase.